Reading from the N-terminus, the 1004-residue chain is Importin subunit beta-5 (1004 aa).

Met-1 carries the post-translational modification N-acetylmethionine. One can recognise an Importin N-terminal domain in the interval 21 to 100 (AETQLLQWCD…REVLLKLCLN (80 aa)).

It belongs to the importin beta family. In terms of assembly, interacts with NAP1.

The protein localises to the cytoplasm. Its subcellular location is the nucleus. It is found in the nuclear pore complex. Functionally, required for nuclear protein import and mediates docking of import substrate to distinct nucleoporins. Serves a receptor for nuclear localization signals. Mediates the nuclear import of TATA-binding protein (TBP) and of histones H2A and H2B. The sequence is that of Importin subunit beta-5 (KAP114) from Saccharomyces cerevisiae (strain ATCC 204508 / S288c) (Baker's yeast).